The primary structure comprises 205 residues: Small ribosomal subunit protein uS5 (205 aa).

One can recognise an S5 DRBM domain in the interval 49–112; the sequence is LVDEVLDINM…VSAKINLVKV (64 aa).

This sequence belongs to the universal ribosomal protein uS5 family. As to quaternary structure, part of the 30S ribosomal subunit. Contacts protein S4.

In terms of biological role, with S4 and S12 plays an important role in translational accuracy. The chain is Small ribosomal subunit protein uS5 from Methanospirillum hungatei JF-1 (strain ATCC 27890 / DSM 864 / NBRC 100397 / JF-1).